The chain runs to 394 residues: Isopentenyl-diphosphate delta-isomerase (394 aa).

Residue R10 to K11 participates in substrate binding. Residues T67, G68–T70, S101, and N129 contribute to the FMN site. Substrate is bound at residue S101–R103. Residue Q168 participates in substrate binding. E169 provides a ligand contact to Mg(2+). FMN is bound by residues K200, S225, T230, G279–R281, and A300–L301.

The protein belongs to the IPP isomerase type 2 family. In terms of assembly, homooctamer. Dimer of tetramers. Requires FMN as cofactor. The cofactor is NADPH. Mg(2+) is required as a cofactor.

Its subcellular location is the cytoplasm. The enzyme catalyses isopentenyl diphosphate = dimethylallyl diphosphate. Functionally, involved in the biosynthesis of isoprenoids. Catalyzes the 1,3-allylic rearrangement of the homoallylic substrate isopentenyl (IPP) to its allylic isomer, dimethylallyl diphosphate (DMAPP). In Pyrococcus furiosus (strain ATCC 43587 / DSM 3638 / JCM 8422 / Vc1), this protein is Isopentenyl-diphosphate delta-isomerase.